The primary structure comprises 283 residues: 4-diphosphocytidyl-2-C-methyl-D-erythritol kinase (283 aa).

Lysine 10 is an active-site residue. An ATP-binding site is contributed by 95–105 (PVAAGLGGGSS). Aspartate 137 is an active-site residue.

The protein belongs to the GHMP kinase family. IspE subfamily.

It carries out the reaction 4-CDP-2-C-methyl-D-erythritol + ATP = 4-CDP-2-C-methyl-D-erythritol 2-phosphate + ADP + H(+). It functions in the pathway isoprenoid biosynthesis; isopentenyl diphosphate biosynthesis via DXP pathway; isopentenyl diphosphate from 1-deoxy-D-xylulose 5-phosphate: step 3/6. In terms of biological role, catalyzes the phosphorylation of the position 2 hydroxy group of 4-diphosphocytidyl-2C-methyl-D-erythritol. In Pediococcus pentosaceus (strain ATCC 25745 / CCUG 21536 / LMG 10740 / 183-1w), this protein is 4-diphosphocytidyl-2-C-methyl-D-erythritol kinase.